Reading from the N-terminus, the 732-residue chain is E3 ubiquitin-protein ligase hel2 (732 aa).

The tract at residues 1-48 (MSPSGPNLNNKEHNRASEKKNSRTHNKKTNRNQSKEKPVSSRSVETPK) is disordered. Positions 10–21 (NKEHNRASEKKN) are enriched in basic and acidic residues. The segment at 81-121 (CFICAEGITYSCVLPCNHRMCHVCALRLRALYKTKECTFCK) adopts an RING-type zinc-finger fold. The region spanning 245–315 (PKCEFCNTHF…RECLERKFVV (71 aa)) is the LIM zinc-binding domain. 3 disordered regions span residues 345-380 (IIPQ…NETA), 411-501 (DFGF…QHQQ), and 623-732 (HDGP…FHIG). Polar residues-rich tracts occupy residues 366–380 (SSTP…NETA) and 415–433 (TLSN…TRTI). The segment covering 457-468 (SSSAPSVPVSAP) has biased composition (low complexity). Serine 482 is subject to Phosphoserine. Polar residues-rich tracts occupy residues 490 to 501 (PMASSEQAQHQQ) and 629 to 654 (SAPS…NTPS). A compositionally biased stretch (low complexity) spans 701 to 713 (STPNTSSNRNSNT).

This sequence belongs to the ZNF598/HEL2 family.

It is found in the cytoplasm. The enzyme catalyses S-ubiquitinyl-[E2 ubiquitin-conjugating enzyme]-L-cysteine + [acceptor protein]-L-lysine = [E2 ubiquitin-conjugating enzyme]-L-cysteine + N(6)-ubiquitinyl-[acceptor protein]-L-lysine.. It functions in the pathway protein modification; protein ubiquitination. Functionally, E3 ubiquitin-protein ligase that plays a key role in the ribosome quality control (RQC), a pathway that takes place when a ribosome has stalled during translation, leading to degradation of nascent peptide chains. Activated when ribosomes are stalled within an mRNA following translation of prematurely polyadenylated mRNAs. Acts as a ribosome collision sensor: specifically recognizes and binds collided ribosome and ubiquitinates the 40S ribosomal proteins rps20/uS10 and rps3/uS3. Catalyzes 'Lys-63'-linked polyubiquitination of rps20/uS10, promoting recruitment of the RQT (ribosome quality control trigger) complex, which drives the disassembly of stalled ribosomes, followed by degradation of nascent peptides. The protein is E3 ubiquitin-protein ligase hel2 of Schizosaccharomyces pombe (strain 972 / ATCC 24843) (Fission yeast).